The sequence spans 617 residues: Chitin elicitor receptor kinase 1 (617 aa).

A signal peptide spans 1–23; sequence MKLKISLIAPILLLFSFFFAVES. Topologically, residues 24-232 are extracellular; that stretch reads KCRTSCPLAL…KSSKQDGVGA (209 aa). Disulfide bonds link Cys-25–Cys-93, Cys-29–Cys-155, and Cys-91–Cys-153. Asn-40, Asn-52, and Asn-102 each carry an N-linked (GlcNAc...) asparagine glycan. Residues 46-74 enclose the LysM 1; degenerate domain; it reads VINQNLNSSIAPYDQINFDPILRYNSNIK. The 33-residue stretch at 108–140 folds into the LysM 2; degenerate domain; it reads RQEDTYERVAISNYANLTTMESLQARNPFPATN. 109–115 lines the chitin pocket; the sequence is QEDTYER. An N-linked (GlcNAc...) asparagine glycan is attached at Asn-123. 137 to 143 is a chitin binding site; it reads PATNIPL. Asn-152 is a glycosylation site (N-linked (GlcNAc...) asparagine). In terms of domain architecture, LysM 3 spans 168–211; it reads VTYPLRPEDSLSSIARSSGVSADILQRYNPGVNFNSGNGIVYVP. The chain crosses the membrane as a helical span at residues 233–253; that stretch reads GVIAGIVIGVIVALLLILFIV. Over 254-617 the chain is Cytoplasmic; it reads YYAYRKNKSK…EDLVSLMSGR (364 aa). 3 positions are modified to phosphoserine: Ser-266, Ser-268, and Ser-274. In terms of domain architecture, Protein kinase spans 322 to 594; the sequence is FNLSFKIGQG…YIVVALSTLF (273 aa). Residues 328-336 and Lys-349 contribute to the ATP site; that span reads IGQGGFGAV. Phosphotyrosine is present on Tyr-390. Asp-441 functions as the Proton acceptor in the catalytic mechanism. Phosphothreonine is present on residues Thr-479 and Thr-519.

Belongs to the protein kinase superfamily. Ser/Thr protein kinase family. As to quaternary structure, forms homodimers and homooligomers. Homodimerization is required to trigger plant defenses. Binds to chitin, chitosan and chito-oligomer oligosaccharide elicitors. Interaction with chitin octamer (NAG(8)) promotes homodimerization while shorter chitin oligomers inhibit homodimerization. Interacts with Pseudomonas syringae hopAB2/avrPtoB. Interacts (preferentially when unphosphorylated) with PBL27 at the plasma membrane. Binds to IOS1. Autophosphorylated. Autophosphorylation is induced by chitin and derivatives. Post-translationally, ubiquitinated and targeted to the proteasome by hopAB2/avrPtoB of Pseudomonas syringae pv. tomato DC3000. In terms of tissue distribution, expressed ubiquitously, with lowest expression in pollen.

The protein resides in the cell membrane. The enzyme catalyses L-seryl-[protein] + ATP = O-phospho-L-seryl-[protein] + ADP + H(+). It carries out the reaction L-threonyl-[protein] + ATP = O-phospho-L-threonyl-[protein] + ADP + H(+). With respect to regulation, activated by chitin-mediated homodimerization. Functionally, lysin motif (LysM) receptor kinase that functions as a cell surface receptor in chitin elicitor (chitooligosaccharides) signaling leading to innate immunity toward both biotic and abiotic stresses (e.g. tolerance to salinity, heavy-metal stresses, and Botrytis cinerea infection). Recognizes microbe-derived N-acetylglucosamine (NAG)-containing ligands. Involved in the resistance to pathogenic fungi Alternaria brassicicola and Erysiphe cichoracearum, probably by sensing microbe-associated molecular patterns (MAMP) and pathogen-associated molecular patterns (PAMP). Plays an essential role in detecting peptidoglycans (e.g. PGNs) and restricting bacterial growth. Target of the bacterial type III effector E3-ligase protein hopAB2/avrPtoB of Pseudomonas syringae pv. tomato DC3000 that mediates ubiquitination and subsequent proteolysis, thus blocking all defense responses by suppressing PAMP-triggered immunity (PTI). Mediates chitin-induced phosphorylation of PBL27. In Arabidopsis thaliana (Mouse-ear cress), this protein is Chitin elicitor receptor kinase 1 (CERK1).